Reading from the N-terminus, the 493-residue chain is Probable polyol transporter 6 (493 aa).

Helical transmembrane passes span 25 to 45, 54 to 74, 85 to 105, 116 to 136, 142 to 162, 177 to 197, 275 to 295, 313 to 333, 343 to 363, 372 to 392, 414 to 434, and 444 to 464; these read SIVS…MVFI, VQIE…SLLA, YTIV…GWGP, TAGL…AEIA, GLLA…GYIV, LMLG…LKMP, VLLT…EAVL, LFLV…TATL, LLLT…FGLT, LAWA…FFSI, GASL…MSFL, and GAFF…FFLL.

It belongs to the major facilitator superfamily. Sugar transporter (TC 2.A.1.1) family.

It is found in the membrane. Plasma membrane sugar-proton symporter. The polypeptide is Probable polyol transporter 6 (PLT6) (Arabidopsis thaliana (Mouse-ear cress)).